Consider the following 507-residue polypeptide: FLYWCH transcription factor 1 (507 aa).

Over residues 1–26 (MYSPESMNSNISSPSPPSSSSLNAPS) the composition is skewed to low complexity. The tract at residues 1-51 (MYSPESMNSNISSPSPPSSSSLNAPSLADAPEVRSDDGEAETSEPSTSVTA) is disordered. The segment at 135 to 192 (KKTRLKVFSNGFFMTFDKLSSCQKKYFWRCEYKNTCKARMHTDIVTEKILTFIHEHNH) adopts an FLYWCH-type zinc-finger fold.

Functionally, probable transcription factor. Binds to the DNA sequence motif 5'-[AG]GGCGCCG-3' in the promoters of target genes, including micro-RNA genes, in order to repress expression, and acting redundantly with flh-2. In Caenorhabditis elegans, this protein is FLYWCH transcription factor 1.